We begin with the raw amino-acid sequence, 313 residues long: Ribosomal RNA small subunit methyltransferase H (313 aa).

Residues 34–36 (GGH), Asp55, Phe82, Asp103, and Gln110 each bind S-adenosyl-L-methionine.

Belongs to the methyltransferase superfamily. RsmH family.

The protein localises to the cytoplasm. It carries out the reaction cytidine(1402) in 16S rRNA + S-adenosyl-L-methionine = N(4)-methylcytidine(1402) in 16S rRNA + S-adenosyl-L-homocysteine + H(+). In terms of biological role, specifically methylates the N4 position of cytidine in position 1402 (C1402) of 16S rRNA. In Pelobacter propionicus (strain DSM 2379 / NBRC 103807 / OttBd1), this protein is Ribosomal RNA small subunit methyltransferase H.